Reading from the N-terminus, the 176-residue chain is Large ribosomal subunit protein uL6 (176 aa).

The protein belongs to the universal ribosomal protein uL6 family. In terms of assembly, part of the 50S ribosomal subunit.

Its function is as follows. This protein binds to the 23S rRNA, and is important in its secondary structure. It is located near the subunit interface in the base of the L7/L12 stalk, and near the tRNA binding site of the peptidyltransferase center. The protein is Large ribosomal subunit protein uL6 of Paraburkholderia phymatum (strain DSM 17167 / CIP 108236 / LMG 21445 / STM815) (Burkholderia phymatum).